A 150-amino-acid polypeptide reads, in one-letter code: Ribosomal RNA large subunit methyltransferase H (150 aa).

S-adenosyl-L-methionine contacts are provided by residues alanine 100 and 118-123 (LSEMTF).

It belongs to the RNA methyltransferase RlmH family. In terms of assembly, homodimer.

It is found in the cytoplasm. It carries out the reaction pseudouridine(1915) in 23S rRNA + S-adenosyl-L-methionine = N(3)-methylpseudouridine(1915) in 23S rRNA + S-adenosyl-L-homocysteine + H(+). In terms of biological role, specifically methylates the pseudouridine at position 1915 (m3Psi1915) in 23S rRNA. In Helicobacter pylori (strain ATCC 700392 / 26695) (Campylobacter pylori), this protein is Ribosomal RNA large subunit methyltransferase H.